The chain runs to 225 residues: Ribosomal RNA small subunit methyltransferase G (225 aa).

S-adenosyl-L-methionine is bound by residues glycine 69, 119–120 (AE), and arginine 136.

Belongs to the methyltransferase superfamily. RNA methyltransferase RsmG family.

The protein resides in the cytoplasm. Its function is as follows. Specifically methylates the N7 position of a guanine in 16S rRNA. The polypeptide is Ribosomal RNA small subunit methyltransferase G (Pseudothermotoga lettingae (strain ATCC BAA-301 / DSM 14385 / NBRC 107922 / TMO) (Thermotoga lettingae)).